The sequence spans 123 residues: uncharacterized protein (123 aa).

Positions 1–19 are cleaved as a signal peptide; sequence MKIKYFFIPLFSSAILFSA. Cys-20 carries N-palmitoyl cysteine lipidation. The S-diacylglycerol cysteine moiety is linked to residue Cys-20.

This sequence belongs to the MG439/MG440 family.

Its subcellular location is the cell membrane. This is an uncharacterized protein from Mycoplasma pneumoniae (strain ATCC 29342 / M129 / Subtype 1) (Mycoplasmoides pneumoniae).